We begin with the raw amino-acid sequence, 65 residues long: Large ribosomal subunit protein bL35 (65 aa).

It belongs to the bacterial ribosomal protein bL35 family.

The chain is Large ribosomal subunit protein bL35 from Alkalilimnicola ehrlichii (strain ATCC BAA-1101 / DSM 17681 / MLHE-1).